The primary structure comprises 356 residues: Dihydroorotate dehydrogenase (quinone) (356 aa).

Residues 66 to 70 (AGFDK) and T90 contribute to the FMN site. K70 is a substrate binding site. 115 to 119 (NRMGF) provides a ligand contact to substrate. FMN is bound by residues N143 and N176. N176 is a substrate binding site. Catalysis depends on S179, which acts as the Nucleophile. N181 serves as a coordination point for substrate. FMN-binding residues include K212 and T240. Residue 241 to 242 (NT) coordinates substrate. FMN contacts are provided by residues G266, G295, and 316-317 (YT).

Belongs to the dihydroorotate dehydrogenase family. Type 2 subfamily. Monomer. Requires FMN as cofactor.

Its subcellular location is the cell membrane. It carries out the reaction (S)-dihydroorotate + a quinone = orotate + a quinol. The protein operates within pyrimidine metabolism; UMP biosynthesis via de novo pathway; orotate from (S)-dihydroorotate (quinone route): step 1/1. Functionally, catalyzes the conversion of dihydroorotate to orotate with quinone as electron acceptor. This chain is Dihydroorotate dehydrogenase (quinone), found in Rhodococcus opacus (strain B4).